A 316-amino-acid chain; its full sequence is ATP synthase gamma chain (316 aa).

It belongs to the ATPase gamma chain family. As to quaternary structure, F-type ATPases have 2 components, CF(1) - the catalytic core - and CF(0) - the membrane proton channel. CF(1) has five subunits: alpha(3), beta(3), gamma(1), delta(1), epsilon(1). CF(0) has three main subunits: a, b and c.

Its subcellular location is the cellular thylakoid membrane. Its function is as follows. Produces ATP from ADP in the presence of a proton gradient across the membrane. The gamma chain is believed to be important in regulating ATPase activity and the flow of protons through the CF(0) complex. The chain is ATP synthase gamma chain from Prochlorococcus marinus (strain AS9601).